A 323-amino-acid chain; its full sequence is Beta-ketoacyl-[acyl-carrier-protein] synthase III (323 aa).

Catalysis depends on residues cysteine 114 and histidine 250. An ACP-binding region spans residues glutamine 251–arginine 255. Asparagine 280 is a catalytic residue.

Belongs to the thiolase-like superfamily. FabH family. In terms of assembly, homodimer.

It localises to the cytoplasm. It catalyses the reaction malonyl-[ACP] + acetyl-CoA + H(+) = 3-oxobutanoyl-[ACP] + CO2 + CoA. It participates in lipid metabolism; fatty acid biosynthesis. Catalyzes the condensation reaction of fatty acid synthesis by the addition to an acyl acceptor of two carbons from malonyl-ACP. Catalyzes the first condensation reaction which initiates fatty acid synthesis and may therefore play a role in governing the total rate of fatty acid production. Possesses both acetoacetyl-ACP synthase and acetyl transacylase activities. Its substrate specificity determines the biosynthesis of branched-chain and/or straight-chain of fatty acids. The protein is Beta-ketoacyl-[acyl-carrier-protein] synthase III of Alkalilimnicola ehrlichii (strain ATCC BAA-1101 / DSM 17681 / MLHE-1).